A 190-amino-acid chain; its full sequence is Putative triphosphatase YjbK (190 aa).

A CYTH domain is found at 4 to 189; that stretch reads EIEIEFKNML…LRFYEEKRKS (186 aa).

This is Putative triphosphatase YjbK (yjbK) from Bacillus subtilis (strain 168).